The primary structure comprises 396 residues: S-adenosylmethionine synthase (396 aa).

Histidine 15 is a binding site for ATP. Residue aspartate 17 coordinates Mg(2+). Residue glutamate 43 participates in K(+) binding. The L-methionine site is built by glutamate 56 and glutamine 99. The segment at glutamine 99–lysine 109 is flexible loop. ATP contacts are provided by residues aspartate 175–lysine 177, arginine 241–phenylalanine 242, aspartate 250, arginine 256–lysine 257, alanine 273, and lysine 277. Position 250 (aspartate 250) interacts with L-methionine. Lysine 281 lines the L-methionine pocket.

The protein belongs to the AdoMet synthase family. Homotetramer; dimer of dimers. Mg(2+) serves as cofactor. Requires K(+) as cofactor.

The protein resides in the cytoplasm. The catalysed reaction is L-methionine + ATP + H2O = S-adenosyl-L-methionine + phosphate + diphosphate. It participates in amino-acid biosynthesis; S-adenosyl-L-methionine biosynthesis; S-adenosyl-L-methionine from L-methionine: step 1/1. Its function is as follows. Catalyzes the formation of S-adenosylmethionine (AdoMet) from methionine and ATP. The overall synthetic reaction is composed of two sequential steps, AdoMet formation and the subsequent tripolyphosphate hydrolysis which occurs prior to release of AdoMet from the enzyme. This Ruminiclostridium cellulolyticum (strain ATCC 35319 / DSM 5812 / JCM 6584 / H10) (Clostridium cellulolyticum) protein is S-adenosylmethionine synthase.